The primary structure comprises 85 residues: Beta-insect depressant toxin Lqh-dprIT3h (85 aa).

A signal peptide spans 1–21 (MKLLLLLTISASMLIEGLVNA). Residues 22-82 (DGYIRGGDGC…EWDYETDTCG (61 aa)) enclose the LCN-type CS-alpha/beta domain. 4 cysteine pairs are disulfide-bonded: Cys-31/Cys-81, Cys-35/Cys-56, Cys-42/Cys-63, and Cys-46/Cys-65. Gly-82 is subject to Glycine amide.

It belongs to the long (4 C-C) scorpion toxin superfamily. Sodium channel inhibitor family. Beta subfamily. Expressed by the venom gland.

It is found in the secreted. Its function is as follows. Depressant insect beta-toxins cause a transient contraction paralysis followed by a slow flaccid paralysis. They bind voltage-independently at site-4 of sodium channels (Nav) and block action potentials, primarily by depolarizing the axonal membrane and suppressing the sodium current. This depressant toxin is active only on insects. It is found in a relatively small amount in the venom. This is Beta-insect depressant toxin Lqh-dprIT3h from Leiurus hebraeus (Hebrew deathstalker scorpion).